Here is a 388-residue protein sequence, read N- to C-terminus: Methylthioribose-1-phosphate isomerase (388 aa).

The active-site Proton donor is the aspartate 258.

The protein belongs to the eIF-2B alpha/beta/delta subunits family. MtnA subfamily.

It localises to the cytoplasm. It is found in the nucleus. The enzyme catalyses 5-(methylsulfanyl)-alpha-D-ribose 1-phosphate = 5-(methylsulfanyl)-D-ribulose 1-phosphate. It participates in amino-acid biosynthesis; L-methionine biosynthesis via salvage pathway; L-methionine from S-methyl-5-thio-alpha-D-ribose 1-phosphate: step 1/6. In terms of biological role, catalyzes the interconversion of methylthioribose-1-phosphate (MTR-1-P) into methylthioribulose-1-phosphate (MTRu-1-P). The protein is Methylthioribose-1-phosphate isomerase of Sordaria macrospora (strain ATCC MYA-333 / DSM 997 / K(L3346) / K-hell).